The following is a 684-amino-acid chain: Dipeptidyl-peptidase 5 (684 aa).

Positions M1–G24 are cleaved as a signal peptide. WD repeat units follow at residues D87–R127, K220–I259, and T323–R363. Catalysis depends on charge relay system residues S542, D627, and H659.

The protein belongs to the peptidase S9C family. Homodimer.

The protein localises to the periplasm. Catalyzes the removal of dipeptides from the N-terminus of oligopeptides. Prefers Ala and hydrophobic residues except Pro at the P1 position, and has no preference for P2 residues. Shows high dipeptidyl peptidase activity toward the synthetic substrates Lys-Ala-, Gly-Phe-, Met-Leu-, and Ser-Tyr-methylcoumaryl-7-amide (MCA), and slowly hydrolyzes Val-Tyr-MCA. Is likely involved in amino acid metabolism and bacterial growth of asaccharolytic P.gingivalis, that utilizes amino acids from extracellular proteinaceous nutrients as energy and carbon sources. The sequence is that of Dipeptidyl-peptidase 5 from Porphyromonas gingivalis (strain ATCC 33277 / DSM 20709 / CIP 103683 / JCM 12257 / NCTC 11834 / 2561).